The following is a 321-amino-acid chain: Cytochrome c biogenesis protein CcsA (321 aa).

The next 7 helical transmembrane spans lie at 17 to 37 (IISI…IIGL), 41 to 61 (LEKG…IRWV), 68 to 88 (LSNL…IHIF), 143 to 163 (MLLS…LLVI), 227 to 247 (IINL…VWAN), 260 to 277 (ETWA…LHTR), and 288 to 308 (AIVA…VNLL).

The protein belongs to the CcmF/CycK/Ccl1/NrfE/CcsA family. May interact with Ccs1.

It localises to the plastid. The protein resides in the chloroplast thylakoid membrane. Required during biogenesis of c-type cytochromes (cytochrome c6 and cytochrome f) at the step of heme attachment. This Piper cenocladum (Ant piper) protein is Cytochrome c biogenesis protein CcsA.